A 248-amino-acid chain; its full sequence is MLIILTGLPGVGKSTFSKNLAKILSKNNIDVIVLGSDLIRESFPVWKEKYEEFIKKSTYRLIDSALKNYWVIVDDTNYYNSMRRDLINIAKKYNKNYAIIYLKASLDVLIRRNIERGEKIPNEVIKKMYEKFDEPGKKYKWDEPFLIIDTTKDIDFNEIAKKLIEKSKEIPKFYVLEENKNKNNNISDKIDKETRKIVSEYIKSKKLDKDKIKEVVELRKEFLKKIKKMEEVDADRVLKEFKDLLNSY.

7–14 (GLPGVGKS) serves as a coordination point for ATP.

Belongs to the L-seryl-tRNA(Sec) kinase family.

It carries out the reaction L-seryl-tRNA(Sec) + ATP = O-phospho-L-seryl-tRNA(Sec) + ADP. It participates in aminoacyl-tRNA biosynthesis; selenocysteinyl-tRNA(Sec) biosynthesis; selenocysteinyl-tRNA(Sec) from L-seryl-tRNA(Sec) (archaeal/eukaryal route): step 1/2. Its function is as follows. Specifically phosphorylates seryl-tRNA(Sec) to O-phosphoseryl-tRNA(Sec), an activated intermediate for selenocysteine biosynthesis. This Methanocaldococcus jannaschii (strain ATCC 43067 / DSM 2661 / JAL-1 / JCM 10045 / NBRC 100440) (Methanococcus jannaschii) protein is L-seryl-tRNA(Sec) kinase (pstK).